Reading from the N-terminus, the 1082-residue chain is AP-3 complex subunit beta-2 (1082 aa).

Positions 1 to 30 (MSAAPAYSEDKGGSAGPGEPEYGHDPASGG) are disordered. A phosphoserine mark is found at Ser272 and Ser282. Basic and acidic residues predominate over residues 666–677 (NREKRKEKEKPF). The disordered stretch occupies residues 666 to 801 (NREKRKEKEK…KTPPGSKSAP (136 aa)). Acidic residues predominate over residues 691–700 (ADSEPESESE). Positions 704–715 (KSSSGSGSGESS) are enriched in low complexity. 2 stretches are compositionally biased toward acidic residues: residues 716-726 (SESDNEEEDEE) and 775-784 (VTSESEEEQV).

The protein belongs to the adaptor complexes large subunit family. In terms of assembly, adaptor protein complex 3 (AP-3) is a heterotetramer composed of two large adaptins (delta-type subunit AP3D1 and beta-type subunit AP3B1 or AP3B2), a medium adaptin (mu-type subunit AP3M1 or AP3M2) and a small adaptin (sigma-type subunit APS1 or AP3S2). AP-3 associates with the BLOC-1 complex.

It is found in the cytoplasmic vesicle. The protein resides in the clathrin-coated vesicle membrane. The protein localises to the golgi apparatus. In terms of biological role, subunit of non-clathrin- and clathrin-associated adaptor protein complex 3 (AP-3) that plays a role in protein sorting in the late-Golgi/trans-Golgi network (TGN) and/or endosomes. The AP complexes mediate both the recruitment of clathrin to membranes and the recognition of sorting signals within the cytosolic tails of transmembrane cargo molecules. AP-3 appears to be involved in the sorting of a subset of transmembrane proteins targeted to lysosomes and lysosome-related organelles. In concert with the BLOC-1 complex, AP-3 is required to target cargos into vesicles assembled at cell bodies for delivery into neurites and nerve terminals. The chain is AP-3 complex subunit beta-2 (Ap3b2) from Mus musculus (Mouse).